We begin with the raw amino-acid sequence, 183 residues long: NAD(P)H-quinone oxidoreductase subunit I, chloroplastic (183 aa).

4Fe-4S ferredoxin-type domains are found at residues 55–84 (GRIH…VDWK) and 95–124 (KSYS…MTEE). Cysteine 64, cysteine 67, cysteine 70, cysteine 74, cysteine 104, cysteine 107, cysteine 110, and cysteine 114 together coordinate [4Fe-4S] cluster.

It belongs to the complex I 23 kDa subunit family. As to quaternary structure, NDH is composed of at least 16 different subunits, 5 of which are encoded in the nucleus. [4Fe-4S] cluster is required as a cofactor.

Its subcellular location is the plastid. The protein localises to the chloroplast thylakoid membrane. The catalysed reaction is a plastoquinone + NADH + (n+1) H(+)(in) = a plastoquinol + NAD(+) + n H(+)(out). It carries out the reaction a plastoquinone + NADPH + (n+1) H(+)(in) = a plastoquinol + NADP(+) + n H(+)(out). NDH shuttles electrons from NAD(P)H:plastoquinone, via FMN and iron-sulfur (Fe-S) centers, to quinones in the photosynthetic chain and possibly in a chloroplast respiratory chain. The immediate electron acceptor for the enzyme in this species is believed to be plastoquinone. Couples the redox reaction to proton translocation, and thus conserves the redox energy in a proton gradient. In Anthoceros angustus (Hornwort), this protein is NAD(P)H-quinone oxidoreductase subunit I, chloroplastic.